The following is a 380-amino-acid chain: Queuine tRNA-ribosyltransferase (380 aa).

Asp-96 serves as the catalytic Proton acceptor. Residues 96-100 (DSGGF), Asp-150, Gln-193, and Gly-220 each bind substrate. The segment at 251–257 (GVGAPDS) is RNA binding. Residue Asp-270 is the Nucleophile of the active site. The segment at 275 to 279 (TRIAR) is RNA binding; important for wobble base 34 recognition. Zn(2+) is bound by residues Cys-308, Cys-310, Cys-313, and His-339.

Belongs to the queuine tRNA-ribosyltransferase family. In terms of assembly, homodimer. Within each dimer, one monomer is responsible for RNA recognition and catalysis, while the other monomer binds to the replacement base PreQ1. Requires Zn(2+) as cofactor.

It carries out the reaction 7-aminomethyl-7-carbaguanine + guanosine(34) in tRNA = 7-aminomethyl-7-carbaguanosine(34) in tRNA + guanine. It participates in tRNA modification; tRNA-queuosine biosynthesis. Catalyzes the base-exchange of a guanine (G) residue with the queuine precursor 7-aminomethyl-7-deazaguanine (PreQ1) at position 34 (anticodon wobble position) in tRNAs with GU(N) anticodons (tRNA-Asp, -Asn, -His and -Tyr). Catalysis occurs through a double-displacement mechanism. The nucleophile active site attacks the C1' of nucleotide 34 to detach the guanine base from the RNA, forming a covalent enzyme-RNA intermediate. The proton acceptor active site deprotonates the incoming PreQ1, allowing a nucleophilic attack on the C1' of the ribose to form the product. After dissociation, two additional enzymatic reactions on the tRNA convert PreQ1 to queuine (Q), resulting in the hypermodified nucleoside queuosine (7-(((4,5-cis-dihydroxy-2-cyclopenten-1-yl)amino)methyl)-7-deazaguanosine). In Streptococcus equi subsp. zooepidemicus (strain H70), this protein is Queuine tRNA-ribosyltransferase.